The primary structure comprises 382 residues: Guanine nucleotide-binding protein G(s) subunit alpha (382 aa).

Positions 1–14 are enriched in polar residues; it reads MGCFGSPTSKQSDV. Residues 1–31 form a disordered region; it reads MGCFGSPTSKQSDVNSEDSKSQKRRSDAISR. The N-palmitoyl glycine moiety is linked to residue Gly-2. Residue Cys-3 is the site of S-palmitoyl cysteine attachment. The segment covering 17–31 has biased composition (basic and acidic residues); the sequence is EDSKSQKRRSDAISR. Residues 42–382 enclose the G-alpha domain; it reads ATHRLLLLGA…RMHLRQYELL (341 aa). Positions 45 to 58 are G1 motif; the sequence is RLLLLGAGESGKST. GTP is bound by residues 50-57, 51-58, 186-192, 211-215, 212-216, 280-283, 281-284, and Ala-354; these read GAGESGKS, AGESGKST, LRCRVLT, DVGGQ, VGGQR, NKQD, and KQDL. Positions 57 and 192 each coordinate Mg(2+). Positions 184–192 are G2 motif; the sequence is DILRCRVLT. The interval 207 to 216 is G3 motif; the sequence is FHMFDVGGQR. Residues 276–283 are G4 motif; the sequence is ILFLNKQD. Residues 352–357 are G5 motif; that stretch reads TCAVDT.

Belongs to the G-alpha family. G(s) subfamily. G proteins are composed of 3 units; alpha, beta and gamma. The alpha chain contains the guanine nucleotide binding site.

Guanine nucleotide-binding proteins (G proteins) are involved as modulators or transducers in various transmembrane signaling systems. The G(s) protein is involved in hormonal regulation of adenylate cyclase: it activates the cyclase. In Drosophila pseudoobscura pseudoobscura (Fruit fly), this protein is Guanine nucleotide-binding protein G(s) subunit alpha (G-salpha60A).